The primary structure comprises 677 residues: Fermitin family homolog 1 (677 aa).

The FERM domain maps to 96–653 (MLRLRLPNLK…HEYIGGYIFL (558 aa)). 3 positions are modified to phosphoserine: S170, S179, and S361. Residues 337-433 (ESEVDEIEAA…EVVPNVNVAE (97 aa)) enclose the PH domain.

This sequence belongs to the kindlin family. Interacts with the cytoplasmic domain of integrins ITGB1 and ITGB3.

The protein localises to the cytoplasm. Its subcellular location is the cytoskeleton. It localises to the cell junction. It is found in the focal adhesion. The protein resides in the cell projection. The protein localises to the ruffle membrane. Involved in cell adhesion. Contributes to integrin activation. When coexpressed with talin, potentiates activation of ITGA2B. Required for normal keratinocyte proliferation. Required for normal polarization of basal keratinocytes in skin, and for normal cell shape. Required for normal adhesion of keratinocytes to fibronectin and laminin, and for normal keratinocyte migration to wound sites. The protein is Fermitin family homolog 1 (FERMT1) of Pongo abelii (Sumatran orangutan).